The primary structure comprises 89 residues: Cell division topological specificity factor (89 aa).

This sequence belongs to the MinE family.

Its function is as follows. Prevents the cell division inhibition by proteins MinC and MinD at internal division sites while permitting inhibition at polar sites. This ensures cell division at the proper site by restricting the formation of a division septum at the midpoint of the long axis of the cell. In Photorhabdus laumondii subsp. laumondii (strain DSM 15139 / CIP 105565 / TT01) (Photorhabdus luminescens subsp. laumondii), this protein is Cell division topological specificity factor.